We begin with the raw amino-acid sequence, 3503 residues long: Protein dachsous (3503 aa).

A signal peptide spans 1-20 (MLRSSLLILLAIVLLGSSQA). Residues 21–3045 (ASHDQERERK…SSSGSIGDWA (3025 aa)) are Extracellular-facing. Cadherin domains are found at residues 22–121 (SHDQ…APTF), 122–233 (PQTS…QPIF), 234–340 (NQSR…QPTI), 345–451 (LSDD…PPEF), 452–558 (EQDL…EPIF), 559–662 (DQSF…RPVF), 663–774 (YPRE…PPIF), 775–878 (EKAR…APEF), 879–983 (EASM…PPVF), 984–1100 (EKDE…DPKF), 1101–1203 (QKSK…APEI), 1205–1312 (DPQE…RPTF), 1313–1432 (TSSS…APEW), and 1433–1549 (PQDP…APHF). N-linked (GlcNAc...) asparagine glycans are attached at residues Asn-220 and Asn-234. The residue at position 236 (Ser-236) is a Phosphoserine. 3 N-linked (GlcNAc...) asparagine glycosylation sites follow: Asn-245, Asn-381, and Asn-416. N-linked (GlcNAc...) asparagine glycosylation is found at Asn-564, Asn-594, and Asn-743. N-linked (GlcNAc...) asparagine glycans are attached at residues Asn-966, Asn-991, Asn-1006, Asn-1029, Asn-1143, and Asn-1236. 4 N-linked (GlcNAc...) asparagine glycosylation sites follow: Asn-1453, Asn-1479, Asn-1524, and Asn-1553. Cadherin domains follow at residues 1556–1666 (GGKT…PPRF), 1667–1794 (LQAV…SPEF), 1796–1899 (PGSC…APRF), 1900–2004 (KLSK…RPIF), 2005–2111 (ERYP…TPVL), 2114–2269 (QNET…SPKF), 2270–2375 (SQKQ…QPTF), 2375–2479 (FPPN…APVF), 2489–2595 (AILP…RSQF), 2596–2699 (LQNQ…FPIF), 2701–2809 (RSAK…EPKF), 2810–2916 (PLTE…TPQF), and 2919–3028 (RTYR…HPGT). Asn-1700, Asn-1884, and Asn-1940 each carry an N-linked (GlcNAc...) asparagine glycan. The N-linked (GlcNAc...) asparagine glycan is linked to Asn-2115. The segment at 2193–2225 (GRALHYEEEIDESSEEDPNNSTRSQRALTSSSF) is disordered. Residues 2200-2210 (EEIDESSEEDP) are compositionally biased toward acidic residues. 2 N-linked (GlcNAc...) asparagine glycosylation sites follow: Asn-2211 and Asn-2212. Residues 2211 to 2225 (NNSTRSQRALTSSSF) are compositionally biased toward polar residues. 6 N-linked (GlcNAc...) asparagine glycosylation sites follow: Asn-2421, Asn-2511, Asn-2520, Asn-2547, Asn-2588, and Asn-2678. 2 N-linked (GlcNAc...) asparagine glycosylation sites follow: Asn-2845 and Asn-2967. The chain crosses the membrane as a helical span at residues 3046 to 3066 (IGLLVAFLLVLCAAAGIFLFI). The Cytoplasmic segment spans residues 3067–3503 (HMRSRKPRNA…SQRGNVGTRM (437 aa)). Disordered regions lie at residues 3114–3195 (AGAA…GRIS), 3360–3404 (LSEH…IPPP), and 3431–3503 (LPRS…GTRM). 2 stretches are compositionally biased toward low complexity: residues 3133–3159 (GAHAGSSGAATTSELSGSEQSGSSGRG) and 3363–3372 (HSGSGASSSA). A compositionally biased stretch (pro residues) spans 3391-3404 (KPPPSAPPTHIPPP). Residues 3440 to 3463 (ASGSFSTSSAMSPSFSPSLSPLAT) are compositionally biased toward low complexity. Ser-3465 and Ser-3469 each carry phosphoserine. Residues 3492–3503 (QPSQRGNVGTRM) are compositionally biased toward polar residues.

Interacts (via cytoplasmic region) with Myo31DF. In terms of processing, phosphorylated by fj on Ser/Thr of cadherin domains. In terms of tissue distribution, expressed in embryonic ectoderm. In larvae, expression is restricted to imaginal disks and brain.

The protein localises to the cell membrane. It is found in the cell junction. Required for normal morphogenesis of adult structures derived from imaginal disks. Plays a role in planar cell polarity and in determining body left-right asymmetry. Expression in segment H1 of the imaginal ring and interaction with Myo31DF are required to induce changes of cell shape and orientation in segment H2, which then gives rise to normal, dextral looping of the adult hindgut. This Drosophila melanogaster (Fruit fly) protein is Protein dachsous (ds).